The sequence spans 202 residues: Imidazoleglycerol-phosphate dehydratase (202 aa).

It belongs to the imidazoleglycerol-phosphate dehydratase family.

The protein localises to the cytoplasm. The catalysed reaction is D-erythro-1-(imidazol-4-yl)glycerol 3-phosphate = 3-(imidazol-4-yl)-2-oxopropyl phosphate + H2O. It participates in amino-acid biosynthesis; L-histidine biosynthesis; L-histidine from 5-phospho-alpha-D-ribose 1-diphosphate: step 6/9. In Acinetobacter baumannii (strain AYE), this protein is Imidazoleglycerol-phosphate dehydratase.